Reading from the N-terminus, the 210-residue chain is Protoporphyrinogen IX oxidase (210 aa).

The next 5 membrane-spanning stretches (helical) occupy residues 22–42 (WFKA…FYLV), 74–94 (YNII…GLIF), 103–123 (GWLH…FYCG), 141–161 (FRAL…LAVF), and 165–185 (LPLD…AASI). Residue His27 coordinates heme. Lys108 serves as a coordination point for heme.

The protein belongs to the HemJ family. Homodimer. Can also form higher oligomers, most probably tetramers. Interacts with Sll1106, however it is unlikely that Sll1106 is required for PPO function. Heme b is required as a cofactor.

The protein resides in the cell membrane. The enzyme catalyses protoporphyrinogen IX + 3 A = protoporphyrin IX + 3 AH2. The protein operates within porphyrin-containing compound metabolism; protoporphyrin-IX biosynthesis; protoporphyrin-IX from protoporphyrinogen-IX: step 1/1. Catalyzes the oxidation of protoporphyrinogen IX to protoporphyrin IX. Is involved in the biosynthesis of tetrapyrrole molecules like heme and chlorophyll. Does not use oxygen or artificial electron acceptors such as menadione or benzoquinone. Is functionally coupled with coproporphyrinogen III oxidase (CPO). Is essential for growth. This is Protoporphyrinogen IX oxidase from Synechocystis sp. (strain ATCC 27184 / PCC 6803 / Kazusa).